The sequence spans 431 residues: Galanin-like G-protein coupled receptor npr-9 (431 aa).

The Extracellular segment spans residues 1 to 34; sequence MEFENLTKEEMEQLQKIYDDTISFERKIGIIIPT. N-linked (GlcNAc...) asparagine glycosylation is present at asparagine 5. The chain crosses the membrane as a helical span at residues 35 to 55; the sequence is IFAVIILVGLVGNALVVIVAF. Residues 56-66 lie on the Cytoplasmic side of the membrane; it reads GRQMRNSTNTL. The chain crosses the membrane as a helical span at residues 67–87; it reads IIGLAISDLMFLLLCVPFTAV. The Extracellular segment spans residues 88–101; that stretch reads DYAAPTWIFPEWTC. Cysteine 101 and cysteine 182 are oxidised to a cystine. The helical transmembrane segment at 102–124 threads the bilayer; it reads SMINFFQHTSAYCSVWTLTLMAL. Residues 125–143 are Cytoplasmic-facing; the sequence is DRYLAVVYPVESMTLRTPR. A helical membrane pass occupies residues 144 to 164; it reads NTVIALCFIYIIIIASQIPVG. The Extracellular portion of the chain corresponds to 165 to 203; the sequence is RMHGIYVYDFIMEKRSTCAILTIATAEATPTMARTYFMT. A helical transmembrane segment spans residues 204–224; the sequence is FNVFGYVLPLGISVVLYGLML. At 225–268 the chain is on the cytoplasmic side; the sequence is RKLWDMPRPGNSQSVGGRNLTNRDSGSSIRRRPEATAAKRKVTR. Residues 235-252 are compositionally biased toward polar residues; that stretch reads NSQSVGGRNLTNRDSGSS. Residues 235 to 257 are disordered; the sequence is NSQSVGGRNLTNRDSGSSIRRRP. A helical membrane pass occupies residues 269 to 289; sequence LVLCVLITWALCWLPLNVCFF. Residues 290–298 are Extracellular-facing; the sequence is MSGLAYPEP. A helical membrane pass occupies residues 299-319; the sequence is LVISHGVIMVIVQIASQVLAY. The Cytoplasmic portion of the chain corresponds to 320 to 431; the sequence is TNSCLNPILY…RSKSTRSYNL (112 aa). Positions 393-414 are enriched in polar residues; sequence SLLKDNSSSATSVQPLRTSIQA. The disordered stretch occupies residues 393–431; that stretch reads SLLKDNSSSATSVQPLRTSIQAKKTKNIGRSKSTRSYNL. Basic residues predominate over residues 415–425; it reads KKTKNIGRSKS.

This sequence belongs to the G-protein coupled receptor 1 family. As to expression, exclusively expressed in the AIB interneuron.

It is found in the cell membrane. Its function is as follows. Neuropeptide that controls movement such as roaming, foraging and backwards locomotion or 'reversals' in response to environmental cues such as food availability or volatile odorants such as octanol. Antagonizes AIB interneuron activity to control bacterial colonization and may negatively regulate the expression of immunity-related genes such as pqm-1 and dod-22 in response to infection by P.aeruginosa. The sequence is that of Galanin-like G-protein coupled receptor npr-9 from Caenorhabditis elegans.